Reading from the N-terminus, the 282-residue chain is 2-dehydro-3-deoxyphosphooctonate aldolase (282 aa).

The protein belongs to the KdsA family.

It is found in the cytoplasm. It catalyses the reaction D-arabinose 5-phosphate + phosphoenolpyruvate + H2O = 3-deoxy-alpha-D-manno-2-octulosonate-8-phosphate + phosphate. It participates in carbohydrate biosynthesis; 3-deoxy-D-manno-octulosonate biosynthesis; 3-deoxy-D-manno-octulosonate from D-ribulose 5-phosphate: step 2/3. Its pathway is bacterial outer membrane biogenesis; lipopolysaccharide biosynthesis. This chain is 2-dehydro-3-deoxyphosphooctonate aldolase, found in Shewanella woodyi (strain ATCC 51908 / MS32).